Reading from the N-terminus, the 263-residue chain is 4-hydroxy-tetrahydrodipicolinate reductase (263 aa).

NAD(+) is bound by residues Gly-7 to Met-12, Gly-96 to Thr-98, and Ala-122 to Phe-125. Residue His-152 is the Proton donor/acceptor of the active site. His-153 contributes to the (S)-2,3,4,5-tetrahydrodipicolinate binding site. Lys-156 acts as the Proton donor in catalysis. (S)-2,3,4,5-tetrahydrodipicolinate is bound at residue Gly-162–Thr-163.

The protein belongs to the DapB family.

It is found in the cytoplasm. It catalyses the reaction (S)-2,3,4,5-tetrahydrodipicolinate + NAD(+) + H2O = (2S,4S)-4-hydroxy-2,3,4,5-tetrahydrodipicolinate + NADH + H(+). The enzyme catalyses (S)-2,3,4,5-tetrahydrodipicolinate + NADP(+) + H2O = (2S,4S)-4-hydroxy-2,3,4,5-tetrahydrodipicolinate + NADPH + H(+). The protein operates within amino-acid biosynthesis; L-lysine biosynthesis via DAP pathway; (S)-tetrahydrodipicolinate from L-aspartate: step 4/4. Catalyzes the conversion of 4-hydroxy-tetrahydrodipicolinate (HTPA) to tetrahydrodipicolinate. The chain is 4-hydroxy-tetrahydrodipicolinate reductase from Listeria welshimeri serovar 6b (strain ATCC 35897 / DSM 20650 / CCUG 15529 / CIP 8149 / NCTC 11857 / SLCC 5334 / V8).